The following is a 226-amino-acid chain: Enolase-phosphatase E1 (226 aa).

Belongs to the HAD-like hydrolase superfamily. MasA/MtnC family. In terms of assembly, monomer. The cofactor is Mg(2+).

It carries out the reaction 5-methylsulfanyl-2,3-dioxopentyl phosphate + H2O = 1,2-dihydroxy-5-(methylsulfanyl)pent-1-en-3-one + phosphate. Its pathway is amino-acid biosynthesis; L-methionine biosynthesis via salvage pathway; L-methionine from S-methyl-5-thio-alpha-D-ribose 1-phosphate: step 3/6. It functions in the pathway amino-acid biosynthesis; L-methionine biosynthesis via salvage pathway; L-methionine from S-methyl-5-thio-alpha-D-ribose 1-phosphate: step 4/6. Bifunctional enzyme that catalyzes the enolization of 2,3-diketo-5-methylthiopentyl-1-phosphate (DK-MTP-1-P) into the intermediate 2-hydroxy-3-keto-5-methylthiopentenyl-1-phosphate (HK-MTPenyl-1-P), which is then dephosphorylated to form the acireductone 1,2-dihydroxy-3-keto-5-methylthiopentene (DHK-MTPene). This Shewanella sp. (strain ANA-3) protein is Enolase-phosphatase E1.